The following is a 350-amino-acid chain: tRNA uridine(34) hydroxylase (350 aa).

In terms of domain architecture, Rhodanese spans 146–240 (DDPDAVFIDM…YARKAREQGL (95 aa)). C200 functions as the Cysteine persulfide intermediate in the catalytic mechanism. The tract at residues 314–350 (PEEEQRRRRAGRENGNKIFNKSRGRLNTQLGIPDPAE) is disordered. Over residues 316–328 (EEQRRRRAGRENG) the composition is skewed to basic and acidic residues.

This sequence belongs to the TrhO family.

The enzyme catalyses uridine(34) in tRNA + AH2 + O2 = 5-hydroxyuridine(34) in tRNA + A + H2O. Its function is as follows. Catalyzes oxygen-dependent 5-hydroxyuridine (ho5U) modification at position 34 in tRNAs. The sequence is that of tRNA uridine(34) hydroxylase from Citrobacter koseri (strain ATCC BAA-895 / CDC 4225-83 / SGSC4696).